The sequence spans 234 residues: tRNA (guanine-N(1)-)-methyltransferase (234 aa).

Residues Gly-110 and 134–139 each bind S-adenosyl-L-methionine; that span reads IGDYVL.

The protein belongs to the RNA methyltransferase TrmD family. In terms of assembly, homodimer.

It localises to the cytoplasm. It carries out the reaction guanosine(37) in tRNA + S-adenosyl-L-methionine = N(1)-methylguanosine(37) in tRNA + S-adenosyl-L-homocysteine + H(+). Specifically methylates guanosine-37 in various tRNAs. This is tRNA (guanine-N(1)-)-methyltransferase from Tropheryma whipplei (strain TW08/27) (Whipple's bacillus).